The chain runs to 161 residues: Cuticle protein 16.8 (161 aa).

Residue Gln-1 is modified to Pyrrolidone carboxylic acid. The segment covering 1 to 10 (QSEPAGPPQP) has biased composition (pro residues). 2 disordered regions span residues 1 to 44 (QSEP…YSYT) and 67 to 103 (ETNE…PAKP). Positions 8–74 (PQPYTFSYDN…TVETNEPGTK (67 aa)) constitute a Chitin-binding type R&amp;R domain. Polar residues predominate over residues 67–86 (ETNEPGTKTSNPADAQIVSN). A compositionally biased stretch (low complexity) spans 87 to 103 (AATDSYSPSPASSPAKP).

Component of the cuticle of the tick. Binds chitin. This chain is Cuticle protein 16.8, found in Ixodes ricinus (Common tick).